We begin with the raw amino-acid sequence, 563 residues long: Pyruvate decarboxylase isozyme 2 (563 aa).

Pyruvate is bound by residues Asp28, His115, Tyr157, and Arg224. Thiamine diphosphate is bound by residues Thr390 and 413 to 415 (GSI). Mg(2+) is bound at residue Asp444. Residues 445 to 446 (GS) and 471 to 476 (NNGYTI) contribute to the thiamine diphosphate site. Positions 471 and 473 each coordinate Mg(2+). A pyruvate-binding site is contributed by Glu477.

It belongs to the TPP enzyme family. Homotetramer. Requires Mg(2+) as cofactor. Thiamine diphosphate serves as cofactor.

Its subcellular location is the cytoplasm. It localises to the nucleus. It carries out the reaction pyruvate + H(+) = acetaldehyde + CO2. The catalysed reaction is 3-methyl-2-oxobutanoate + H(+) = 2-methylpropanal + CO2. It catalyses the reaction (S)-3-methyl-2-oxopentanoate + H(+) = 2-methylbutanal + CO2. The enzyme catalyses indole-3-pyruvate + H(+) = indole-3-acetaldehyde + CO2. It carries out the reaction 3-phenylpyruvate + H(+) = 2-phenylacetaldehyde + CO2. The catalysed reaction is 2-oxobutanoate + H(+) = propanal + CO2. It catalyses the reaction 2-oxopentanoate + H(+) = butanal + CO2. The enzyme catalyses 2 acetaldehyde = acetoin. It carries out the reaction acetaldehyde + pyruvate + H(+) = acetoin + CO2. Its pathway is fermentation; ethanol fermentation. It participates in amino-acid degradation; Ehrlich pathway. Allosterically activated by its substrate, pyruvate. Its function is as follows. Second most abundant of three pyruvate decarboxylases (PDC1, PDC5, PDC6) implicated in the nonoxidative conversion of pyruvate to acetaldehyde and carbon dioxide during alcoholic fermentation. Most of the produced acetaldehyde is subsequently reduced to ethanol, but some is required for cytosolic acetyl-CoA production for biosynthetic pathways. The enzyme is also one of five 2-oxo acid decarboxylases (PDC1, PDC5, PDC6, ARO10, and THI3) able to decarboxylate more complex 2-oxo acids (alpha-keto-acids) than pyruvate, which seem mainly involved in amino acid catabolism. Here the enzyme catalyzes the decarboxylation of amino acids, which, in a first step, have been transaminated to the corresponding 2-oxo acids. In a third step, the resulting aldehydes are reduced to alcohols, collectively referred to as fusel oils or alcohols. Its preferred substrates are the transaminated amino acids derived from threonine (2-oxobutanoate), norvaline (2-oxopentanoate), valine (3-methyl-2-oxobutanoate, also alpha-keto-isovalerate), isoleucine ((3S)-3-methyl-2-oxopentanoate, also alpha-keto-beta-methylvalerate), phenylalanine (phenylpyruvate), and tryptophan (3-(indol-3-yl)pyruvate), whereas transaminated leucine is no substrate. In a side-reaction the carbanionic intermediate (or active aldehyde) generated by decarboxylation or by activation of an aldehyde can react with an aldehyde via condensation (or carboligation) yielding a 2-hydroxy ketone, collectively called acyloins. This chain is Pyruvate decarboxylase isozyme 2 (PDC5), found in Saccharomyces cerevisiae (strain ATCC 204508 / S288c) (Baker's yeast).